A 966-amino-acid polypeptide reads, in one-letter code: Envelope glycoprotein (966 aa).

An N-terminal signal peptide occupies residues 1–83 (MDAGARYMRL…LLGINMCVSA (83 aa)). Over 84 to 801 (EDYITLISDP…SLKDVFDWSG (718 aa)) the chain is Extracellular. N-linked (GlcNAc...) asparagine; by host glycosylation is found at asparagine 101, asparagine 134, asparagine 179, asparagine 220, asparagine 231, asparagine 334, asparagine 351, asparagine 357, asparagine 382, asparagine 403, asparagine 407, asparagine 438, asparagine 443, asparagine 449, asparagine 459, asparagine 469, asparagine 483, asparagine 495, asparagine 505, asparagine 511, asparagine 529, and asparagine 536. A fusion peptide region spans residues 633 to 653 (GVGLVIMLVIMAIVAAAGASL). Coiled coils occupy residues 665–715 (KAAV…RIML) and 756–791 (RGLQ…EVWE). The tract at residues 699 to 715 (LEARVARVEAITDRIML) is immunosuppression. Residues 802 to 822 (WFSWLKYIPIIVVGLLGCILI) traverse the membrane as a helical segment. The Cytoplasmic portion of the chain corresponds to 823–966 (RAVICVCQPL…LWCYKKSKSL (144 aa)).

As to quaternary structure, the mature envelope protein (Env) consists of a trimer of SU-TM heterodimers attached by noncovalent interactions or by a labile interchain disulfide bond. Post-translationally, specific enzymatic cleavages in vivo yield mature proteins. Envelope glycoproteins are synthesized as an inactive precursor that is N-glycosylated and processed likely by host cell furin or by a furin-like protease in the Golgi to yield the mature SU and TM proteins. The cleavage site between SU and TM requires the minimal sequence [KR]-X-[KR]-R.

The protein localises to the virion membrane. Its subcellular location is the host cell membrane. Functionally, the surface protein (SU) attaches the virus to the host cell by binding to its receptor. This interaction triggers the refolding of the transmembrane protein (TM) and is thought to activate its fusogenic potential by unmasking its fusion peptide. Fusion occurs at the host cell plasma membrane. In terms of biological role, the transmembrane protein (TM) acts as a class I viral fusion protein. Under the current model, the protein has at least 3 conformational states: pre-fusion native state, pre-hairpin intermediate state, and post-fusion hairpin state. During viral and target cell membrane fusion, the coiled coil regions (heptad repeats) assume a trimer-of-hairpins structure, positioning the fusion peptide in close proximity to the C-terminal region of the ectodomain. The formation of this structure appears to drive apposition and subsequent fusion of viral and target cell membranes. Membranes fusion leads to delivery of the nucleocapsid into the cytoplasm. This is Envelope glycoprotein (env) from Caprine arthritis encephalitis virus (strain Cork) (CAEV-Co).